The primary structure comprises 214 residues: Large ribosomal subunit protein uL16 (214 aa).

Arginine 32 is modified (citrulline). Residue lysine 175 forms a Glycyl lysine isopeptide (Lys-Gly) (interchain with G-Cter in SUMO2) linkage. A Glycyl lysine isopeptide (Lys-Gly) (interchain with G-Cter in ubiquitin) cross-link involves residue lysine 188.

It belongs to the universal ribosomal protein uL16 family. Component of the large ribosomal subunit. Mature ribosomes consist of a small (40S) and a large (60S) subunit. The 40S subunit contains about 33 different proteins and 1 molecule of RNA (18S). The 60S subunit contains about 49 different proteins and 3 molecules of RNA (28S, 5.8S and 5S). Citrullinated by PADI4. Post-translationally, ufmylated by UFL1.

The protein localises to the cytoplasm. In terms of biological role, component of the large ribosomal subunit. Plays a role in the formation of actively translating ribosomes. May play a role in the embryonic brain development. This Homo sapiens (Human) protein is Large ribosomal subunit protein uL16.